A 660-amino-acid polypeptide reads, in one-letter code: Phosphatidylinositol-3-phosphate phosphatase MTMR7 (660 aa).

The 379-residue stretch at 126 to 504 (GWVLIDLSEE…FMYKFWSGMY (379 aa)) folds into the Myotubularin phosphatase domain. Asn-250, Asn-275, and Ile-276 together coordinate a 1,2-diacyl-sn-glycero-3-phospho-(1D-myo-inositol-3-phosphate). Residue Cys-338 is the Phosphocysteine intermediate of the active site. A 1,2-diacyl-sn-glycero-3-phospho-(1D-myo-inositol-3-phosphate) contacts are provided by Ser-339, Asp-340, Gly-341, Trp-342, Asp-343, Arg-344, and Arg-384. Positions 521–551 (LMAVKEETQQLEEELEALEERLEKIQKVQLN) form a coiled coil. The disordered stretch occupies residues 554–660 (KVKSKQSEPS…DSDEAVFLTA (107 aa)). Positions 566 to 596 (SGFSTSDNSIANTPQDYSGNMKSFPSRSPSQ) are enriched in polar residues. Phosphothreonine is present on Thr-578. The segment covering 641-653 (APSEDSGKDRDSD) has biased composition (basic and acidic residues).

This sequence belongs to the protein-tyrosine phosphatase family. Non-receptor class myotubularin subfamily. In terms of assembly, heterodimer (via C-terminus) with MTMR9 (via coiled coil domain); the interaction enhances MTMR7 catalytic activity. Does not homodimerize. Interacts with RAB1B (in GDP-bound form). As to expression, expressed specifically in brain.

It localises to the cytoplasm. Its subcellular location is the endomembrane system. The catalysed reaction is a 1,2-diacyl-sn-glycero-3-phospho-(1D-myo-inositol-3-phosphate) + H2O = a 1,2-diacyl-sn-glycero-3-phospho-(1D-myo-inositol) + phosphate. The enzyme catalyses 1D-myo-inositol 1,3-bisphosphate + H2O = 1D-myo-inositol 1-phosphate + phosphate. Interaction with MTMR9 increases phosphatase activity. Its function is as follows. Lipid phosphatase that specifically dephosphorylates the D-3 position of phosphatidylinositol 3-phosphate (PtdIns(3)P) and inositol 1,3-bisphosphate (Ins(1,3)P2). This Homo sapiens (Human) protein is Phosphatidylinositol-3-phosphate phosphatase MTMR7.